A 276-amino-acid polypeptide reads, in one-letter code: Ribosomal RNA small subunit methyltransferase A (276 aa).

The S-adenosyl-L-methionine site is built by Asn-27, Leu-29, Gly-54, Glu-75, Asp-101, and Asn-123.

This sequence belongs to the class I-like SAM-binding methyltransferase superfamily. rRNA adenine N(6)-methyltransferase family. RsmA subfamily.

The protein localises to the cytoplasm. It carries out the reaction adenosine(1518)/adenosine(1519) in 16S rRNA + 4 S-adenosyl-L-methionine = N(6)-dimethyladenosine(1518)/N(6)-dimethyladenosine(1519) in 16S rRNA + 4 S-adenosyl-L-homocysteine + 4 H(+). Specifically dimethylates two adjacent adenosines (A1518 and A1519) in the loop of a conserved hairpin near the 3'-end of 16S rRNA in the 30S particle. May play a critical role in biogenesis of 30S subunits. The chain is Ribosomal RNA small subunit methyltransferase A from Bartonella bacilliformis (strain ATCC 35685 / KC583 / Herrer 020/F12,63).